We begin with the raw amino-acid sequence, 137 residues long: Histone H2B (137 aa).

Over residues M1 to P10 the composition is skewed to basic and acidic residues. A disordered region spans residues M1–E46. K8 and K9 each carry N6-acetyllysine; alternate. Residues K8 and K9 each participate in a glycyl lysine isopeptide (Lys-Gly) (interchain with G-Cter in SUMO); alternate cross-link. A Phosphoserine modification is found at S12. An N6-acetyllysine modification is found at K13. At K24 the chain carries N6-acetyllysine; alternate. K24 participates in a covalent cross-link: Glycyl lysine isopeptide (Lys-Gly) (interchain with G-Cter in SUMO); alternate. K25 participates in a covalent cross-link: Glycyl lysine isopeptide (Lys-Gly) (interchain with G-Cter in SUMO). Residue K131 forms a Glycyl lysine isopeptide (Lys-Gly) (interchain with G-Cter in ubiquitin) linkage.

This sequence belongs to the histone H2B family. The nucleosome is a histone octamer containing two molecules each of H2A, H2B, H3 and H4 assembled in one H3-H4 heterotetramer and two H2A-H2B heterodimers. The octamer wraps approximately 147 bp of DNA. In terms of processing, monoubiquitinated by the UBC2-BRE1 complex to form H2BK123ub1. H2BK123ub1 gives a specific tag for epigenetic transcriptional activation and is also prerequisite for H3K4me and H3K79me formation. H2BK123ub1 also modulates the formation of double-strand breaks during meiosis and is a prerequisite for DNA-damage checkpoint activation. Post-translationally, phosphorylated to form H2BS10ph during progression through meiotic prophase. May be correlated with chromosome condensation. Acetylated by GCN5 to form H2BK11ac and H2BK16ac. H2BK16ac can also be formed by ESA1. Acetylation of N-terminal lysines and particularly formation of H2BK11acK16ac has a positive effect on transcription. In terms of processing, sumoylation to form H2BK6su or H2BK7su, and probably also H2BK16su or H2BK17su, occurs preferentially near the telomeres and represses gene transcription.

It is found in the nucleus. Its subcellular location is the chromosome. In terms of biological role, core component of nucleosome. Nucleosomes wrap and compact DNA into chromatin, limiting DNA accessibility to the cellular machineries which require DNA as a template. Histones thereby play a central role in transcription regulation, DNA repair, DNA replication and chromosomal stability. DNA accessibility is regulated via a complex set of post-translational modifications of histones, also called histone code, and nucleosome remodeling. The sequence is that of Histone H2B (HTB1) from Gibberella zeae (strain ATCC MYA-4620 / CBS 123657 / FGSC 9075 / NRRL 31084 / PH-1) (Wheat head blight fungus).